The chain runs to 372 residues: D-alanine--D-alanine ligase (372 aa).

In terms of domain architecture, ATP-grasp spans 145–349 (KTVLRAGGIP…CPNLLDQLIE (205 aa)). Residue 176 to 231 (DRWGTSELFVKAVSLGSSVATLPVKTETEFTKAVKEVFRYDDRLMVEPRIRGREIE) coordinates ATP. Residues D303, E316, and N318 each coordinate Mg(2+).

It belongs to the D-alanine--D-alanine ligase family. It depends on Mg(2+) as a cofactor. Mn(2+) serves as cofactor.

The protein localises to the cytoplasm. It carries out the reaction 2 D-alanine + ATP = D-alanyl-D-alanine + ADP + phosphate + H(+). It participates in cell wall biogenesis; peptidoglycan biosynthesis. Its function is as follows. Cell wall formation. In Coxiella burnetii (strain Dugway 5J108-111), this protein is D-alanine--D-alanine ligase.